We begin with the raw amino-acid sequence, 332 residues long: D-amino acid oxidase (332 aa).

FAD is bound by residues alanine 8, glycine 9, isoleucine 10, threonine 39, threonine 40, alanine 45, glycine 46, leucine 47, valine 161, and serine 180. The D-proline site is built by tyrosine 218 and arginine 274. D-serine is bound by residues tyrosine 218 and arginine 274. 5 residues coordinate FAD: arginine 274, glycine 305, glycine 306, glycine 308, and threonine 310. Position 306 (glycine 306) interacts with D-proline. Glycine 306 provides a ligand contact to D-serine. Positions 330–332 match the Microbody targeting signal motif; it reads AKL.

It belongs to the DAMOX/DASOX family. Requires FAD as cofactor.

Its subcellular location is the peroxisome matrix. It carries out the reaction a D-alpha-amino acid + O2 + H2O = a 2-oxocarboxylate + H2O2 + NH4(+). It catalyses the reaction D-alanine + O2 + H2O = pyruvate + H2O2 + NH4(+). The catalysed reaction is D-arginine + O2 + H2O = 5-guanidino-2-oxopentanoate + H2O2 + NH4(+). The enzyme catalyses D-asparagine + O2 + H2O = 2-oxosuccinamate + H2O2 + NH4(+). It carries out the reaction D-cysteine + O2 + H2O = 2-oxo-3-sulfanylpropanoate + H2O2 + NH4(+). It catalyses the reaction D-glutamine + O2 + H2O = 2-oxoglutaramate + H2O2 + NH4(+). The catalysed reaction is D-isoleucine + O2 + H2O = (R)-3-methyl-2-oxopentanoate + H2O2 + NH4(+). The enzyme catalyses D-leucine + O2 + H2O = 4-methyl-2-oxopentanoate + H2O2 + NH4(+). It carries out the reaction D-lysine + O2 + H2O = 6-amino-2-oxohexanoate + H2O2 + NH4(+). It catalyses the reaction D-methionine + O2 + H2O = 4-methylsulfanyl-2-oxobutanoate + H2O2 + NH4(+). The catalysed reaction is D-phenylalanine + O2 + H2O = 3-phenylpyruvate + H2O2 + NH4(+). The enzyme catalyses D-proline + O2 = 1-pyrroline-2-carboxylate + H2O2. It carries out the reaction D-valine + O2 + H2O = 3-methyl-2-oxobutanoate + H2O2 + NH4(+). It catalyses the reaction D-histidine + O2 + H2O = 3-(imidazol-5-yl)pyruvate + H2O2 + NH4(+). The catalysed reaction is D-tyrosine + O2 + H2O = 3-(4-hydroxyphenyl)pyruvate + H2O2 + NH4(+). The enzyme catalyses D-serine + O2 + H2O = 3-hydroxypyruvate + H2O2 + NH4(+). It carries out the reaction D-threonine + O2 + H2O = (S)-3-hydroxy-2-oxobutanoate + H2O2 + NH4(+). It catalyses the reaction D-tryptophan + O2 + H2O = indole-3-pyruvate + H2O2 + NH4(+). Catalyzes the oxidative deamination of D-amino acids with broad substrate specificity. Could be responsible for the degradation of diet-derived D-alanine in the intestine. Maintains the asexual state of worms and represses early ovarian development. Following sexual induction, the enzyme is required for differentiation of oogonia into oocytes in the developing ovaries. This Dugesia ryukyuensis (Freshwater planarian flatworm) protein is D-amino acid oxidase.